The primary structure comprises 119 residues: Divalent-cation tolerance protein CutA (119 aa).

Cu cation-binding residues include Cys-23, His-90, and His-91.

It belongs to the CutA family. Homotrimer. It depends on Cu cation as a cofactor.

The protein localises to the cytoplasm. Functionally, involved in resistance toward heavy metals. The polypeptide is Divalent-cation tolerance protein CutA (Yersinia pseudotuberculosis serotype O:1b (strain IP 31758)).